A 417-amino-acid chain; its full sequence is MTAFKSDFLNILQERGFIHQCSDFEGLDALAAKGEATAYVGYDCTARSLHIGNYLTMMMLHWLQQSGNKPITLMGGGTTMVGDPSGKDETRAMRTVAEIEANKESIRGVFAKVLRYGDGKSDAVMLDNAEWLTKLNWIEMLRDVGRHFSVNRMLTMDSVRLRLEREQEMSFIEFNYMVCQAYDFVELAKRTGCKLQMGGSDQWGNIIMGVDLGRRMGTHQLFALTTPLLTTASGAKMGKTAQGAVWLNADQFSPYDFWQYWRNTEDADVGKFLKLFTTLPMSEIGKLEALGGSEINEAKKVLATEATALLHGRDAANEAAETARRTFEEGALAESLPTVEIPRGELDAGFGVLNAFVKAGLVASNGEARRQIKGGGLRVNDEPVTDDKMALSAAHLTPEGVIKLSFGKKKHILIKPA.

Tyr-39 contributes to the L-tyrosine binding site. A 'HIGH' region motif is present at residues Cys-44–Asn-53. Residues Tyr-176 and Gln-180 each coordinate L-tyrosine. The 'KMSKS' region signature appears at Lys-236–Thr-240. Lys-239 is a binding site for ATP. In terms of domain architecture, S4 RNA-binding spans Phe-350–Ala-417.

Belongs to the class-I aminoacyl-tRNA synthetase family. TyrS type 1 subfamily. Homodimer.

The protein resides in the cytoplasm. It carries out the reaction tRNA(Tyr) + L-tyrosine + ATP = L-tyrosyl-tRNA(Tyr) + AMP + diphosphate + H(+). Catalyzes the attachment of tyrosine to tRNA(Tyr) in a two-step reaction: tyrosine is first activated by ATP to form Tyr-AMP and then transferred to the acceptor end of tRNA(Tyr). This chain is Tyrosine--tRNA ligase, found in Bradyrhizobium diazoefficiens (strain JCM 10833 / BCRC 13528 / IAM 13628 / NBRC 14792 / USDA 110).